The following is a 189-amino-acid chain: Elongation factor P (189 aa).

The residue at position 34 (Lys34) is an N6-(3,6-diaminohexanoyl)-5-hydroxylysine.

Belongs to the elongation factor P family. Post-translationally, may be beta-lysylated on the epsilon-amino group of Lys-34 by the combined action of EpmA and EpmB, and then hydroxylated on the C5 position of the same residue by EpmC (if this protein is present). Lysylation is critical for the stimulatory effect of EF-P on peptide-bond formation. The lysylation moiety may extend toward the peptidyltransferase center and stabilize the terminal 3-CCA end of the tRNA. Hydroxylation of the C5 position on Lys-34 may allow additional potential stabilizing hydrogen-bond interactions with the P-tRNA.

The protein resides in the cytoplasm. The protein operates within protein biosynthesis; polypeptide chain elongation. In terms of biological role, involved in peptide bond synthesis. Alleviates ribosome stalling that occurs when 3 or more consecutive Pro residues or the sequence PPG is present in a protein, possibly by augmenting the peptidyl transferase activity of the ribosome. Modification of Lys-34 is required for alleviation. The sequence is that of Elongation factor P from Legionella pneumophila (strain Lens).